We begin with the raw amino-acid sequence, 908 residues long: WD repeat-containing protein 44 (908 aa).

The interval 1–163 (MMPLKMCTWG…SSADQLDASK (163 aa)) is binding activity. A phosphoserine mark is found at Ser17, Ser40, Ser61, Ser71, Ser86, and Ser116. Composition is skewed to polar residues over residues 108-120 (QQGS…QNAA) and 148-157 (NNLTEVSSAD). Disordered regions lie at residues 108 to 158 (QQGS…SADQ), 202 to 273 (APAK…KDNI), 309 to 341 (TAQE…RELT), 391 to 418 (VSND…RLKQ), and 454 to 474 (DEVF…GMPY). Phosphothreonine occurs at positions 151 and 211. An important for interaction with ARHGAP26 AND ARHGAP10 region spans residues 203–249 (PAKPPRHLTPEPDIVASTKKPVPARPPPPTNFPPPRPPPPSRPAPPP). The segment covering 225–248 (PARPPPPTNFPPPRPPPPSRPAPP) has biased composition (pro residues). At Ser254 the chain carries Phosphoserine. Residues 254–270 (SDLEFEALKTPDLDVPK) are compositionally biased toward basic and acidic residues. Residue Thr263 is modified to Phosphothreonine. Residues 326–339 (VMGPQRPRSNSGRE) are important for interaction with RAB11A. 2 positions are modified to phosphoserine: Ser334 and Ser336. Thr341 and Thr396 each carry phosphothreonine. A phosphoserine mark is found at Ser398, Ser465, Ser466, and Ser467. Residues 462–471 (DDPSSSDDEG) are compositionally biased toward acidic residues. Position 474 is a phosphotyrosine (Tyr474). The WD 1 repeat unit spans residues 504–543 (EHMGAVWTMKFSHCGRLLASAGQDNIVRIWALKNAFDYFN). The disordered stretch occupies residues 552 to 587 (EGRVSPSPSQESLSSSKSDTDMGVCSGTDEDPDDKN). Phosphoserine is present on residues Ser556 and Ser560. The segment covering 556–568 (SPSPSQESLSSSK) has biased composition (low complexity). 5 WD repeats span residues 600-638 (GHTA…CLCC), 640-680 (QHID…VALW), 685-724 (GQTK…YHTQ), 735-774 (KVGR…LSMK), and 779-818 (VNSS…SKFT).

As to quaternary structure, interacts preferentially with the GTP-bound form of RAB11 when membrane-associated. Interacts with GRAF1/ARHGAP26 or GRAF2/ARHGAP10; the interaction connects the endoplasmic reticulum (ER) with the endosomal tubule. Interacts with VAPA (via MSP domain) or VAPB (via MSP domain); the interaction connects the ER with the endosomal tubule. Does not bind to other Rab and Rho small G proteins. Phosphorylated by ATK1; the phosphorylation stabilizes its interaction with RAB11A and RAB11B. In terms of tissue distribution, expressed in heart; brain; spleen; lung; liver; muscle and kidney.

It localises to the cytoplasm. Its subcellular location is the cytosol. The protein localises to the perinuclear region. It is found in the endosome membrane. The protein resides in the golgi apparatus. It localises to the trans-Golgi network. Functionally, downstream effector for Rab11 which regulates Rab11 intracellular membrane trafficking functions such as endocytic recycling, intracellular ciliogenesis and protein export. ATK1-mediated phosphorylation of WDR44 induces binding to Rab11 which activates endocytic recycling of transferrin receptor back to the plasma membrane. When bound to Rab11, prevents the formation of the ciliogenic Rab11-Rabin8/RAB3IP-RAB11FIP3 complex, therefore inhibiting preciliary trafficking and ciliogenesis. May participate in neo-synthesized protein export by connecting the endoplasmic reticulum (ER) with the endosomal tubule via direct interactions with the integral ER proteins VAPA or VAPB and the endosomal protein GRAFs (GRAF1/ARHGAP26 or GRAF2/ARHGAP10), which facilitates the transfer of proteins such as E-cadherin, MPP14 and CFTR into a Rab8-Rab10-Rab11-dependent export route. The chain is WD repeat-containing protein 44 from Rattus norvegicus (Rat).